The following is a 217-amino-acid chain: UPF0502 protein VF_A0604 (217 aa).

This sequence belongs to the UPF0502 family.

The polypeptide is UPF0502 protein VF_A0604 (Aliivibrio fischeri (strain ATCC 700601 / ES114) (Vibrio fischeri)).